An 832-amino-acid polypeptide reads, in one-letter code: Receptor-interacting serine/threonine-protein kinase 4 (832 aa).

The 265-residue stretch at 22-286 folds into the Protein kinase domain; it reads FTGWEKVGSG…QGNGLNGELI (265 aa). Residues 28-36 and K51 each bind ATP; that span reads VGSGGFGQV. K51 participates in a covalent cross-link: Glycyl lysine isopeptide (Lys-Gly) (interchain with G-Cter in ubiquitin). D143 serves as the catalytic Proton acceptor. Residue K145 forms a Glycyl lysine isopeptide (Lys-Gly) (interchain with G-Cter in ubiquitin) linkage. Disordered stretches follow at residues 325-368 and 389-424; these read QEIT…RLKR and SGVSQAVEGPEELSRSSSESKLPSSGSGKRLSGVSS. Residues 329–342 show a composition bias toward acidic residues; the sequence is SETEDLCEKPDDEV. Positions 343–359 are enriched in basic and acidic residues; sequence KETAHDLDVKSPPEPRS. Over residues 403–424 the composition is skewed to low complexity; it reads RSSSESKLPSSGSGKRLSGVSS. ANK repeat units follow at residues 485 to 514, 518 to 547, 551 to 580, 584 to 613, 617 to 647, 651 to 680, 684 to 713, 717 to 746, 750 to 780, and 782 to 811; these read SGASLLHLAVEAGQEECAKWLLLNNANPNL, RGSTPLHMAVERRVRGVVELLLARKISVNA, DQWTALHFAAQNGDESSTRLLLEKNASVNE, EGRTPMHVACQHGQENIVRILLRRGVDVSL, DAWLPLHYAAWQGHLPIVKLLAKQPGVSVNA, DGRTPLHLAAQRGHYRVARILIDLCSDVNV, LAQTPLHVAAETGHTSTARLLLHRGAGKEA, DGYTALHLAARNGHLATVKLLVEEKADVLA, LNQTALHLAAAHGHSEVVEELVSADVIDLFD, and QGLSALHLAAQGRHAQTVETLLRHGAHINL.

The protein belongs to the protein kinase superfamily. TKL Ser/Thr protein kinase family. Interacts with PRKCB. Interacts with TRAF1, TRAF2, TRAF3 and TRAF5. Interacts with BIRC2/c-IAP1, BIRC3/c-IAP2 and XIAP/BIRC4. May be phosphorylated by MAP3K2 and MAP3K3. In terms of processing, proteolytically cleaved by during Fas-induced apoptosis. Cleavage at Asp-388 and Asp-426. Post-translationally, polyubiquitinated with 'Lys-48' and 'Lys-63'-linked chains by BIRC2/c-IAP1 and BIRC3/c-IAP2, leading to activation of NF-kappa-B. As to expression, expressed in hair follicles and skin.

It localises to the cytoplasm. It is found in the membrane. The enzyme catalyses L-seryl-[protein] + ATP = O-phospho-L-seryl-[protein] + ADP + H(+). It carries out the reaction L-threonyl-[protein] + ATP = O-phospho-L-threonyl-[protein] + ADP + H(+). Its function is as follows. Serine/threonine protein kinase. Required for embryonic skin development and correct skin homeostasis in adults, via phosphorylation of PKP1 and subsequent promotion of keratinocyte differentiation and cell adhesion. It is a direct transcriptional target of TP63. Plays a role in NF-kappa-B activation. This is Receptor-interacting serine/threonine-protein kinase 4 (RIPK4) from Homo sapiens (Human).